A 280-amino-acid polypeptide reads, in one-letter code: MALKSYKPTTPGQRGLVLIDRSELWKGRPVKSLTEGLTKSGGRNNTGRITSRRRGGGAKRLYRIVDFKRNKFDVAATVERIEYDPNRTAFIALIKYEDGEQAYILAPQRLAVGDKVVASAKADIKPGNAMPFSGMPIGTIVHNIEMKPGKGGQIARAAGTYAQFVGRDGGYAQIRLSSGELRMVRQECMATVGAVSNPDNSNQNYGKAGRMRHKGIRPSVRGVAMNPIDHPHGGGEGRTSGGRTPVTPWGKDTKGTRTRNKNKASQKLIIRSRHAKKKGR.

2 disordered regions span residues 33–55 and 224–266; these read LTEGLTKSGGRNNTGRITSRRRG and AMNP…KASQ. Positions 256–266 are enriched in basic residues; it reads TRTRNKNKASQ.

The protein belongs to the universal ribosomal protein uL2 family. Part of the 50S ribosomal subunit. Forms a bridge to the 30S subunit in the 70S ribosome.

Its function is as follows. One of the primary rRNA binding proteins. Required for association of the 30S and 50S subunits to form the 70S ribosome, for tRNA binding and peptide bond formation. It has been suggested to have peptidyltransferase activity; this is somewhat controversial. Makes several contacts with the 16S rRNA in the 70S ribosome. The protein is Large ribosomal subunit protein uL2 of Ruegeria pomeroyi (strain ATCC 700808 / DSM 15171 / DSS-3) (Silicibacter pomeroyi).